A 243-amino-acid polypeptide reads, in one-letter code: Ornithine decarboxylase antizyme 3 (243 aa).

Phosphoserine occurs at positions 6, 9, and 12.

It belongs to the ODC antizyme family. In terms of assembly, interacts with ODC1 and thereby sterically blocks ODC homodimerization. Interacts with AZIN2; this interaction disrupts the interaction between the antizyme and ODC1. Interacts with GGN. As to expression, testis specific. Expressed throughout the differentiation process from spermatids to spermatozoa in the inner part of the seminiferous tubules.

It is found in the nucleus. The protein resides in the cytoplasm. Its function is as follows. Ornithine decarboxylase (ODC) antizyme protein that negatively regulates ODC activity and intracellular polyamine biosynthesis and uptake in response to increased intracellular polyamine levels. Binds to ODC monomers, inhibiting the assembly of the functional ODC homodimers. Does not target the ODC monomers for degradation, which allows a protein synthesis-independent restoration of ODC activity. Stabilizes AZIN2 by interfering with its ubiquitination. Involved in the translocation of AZNI2 from ER-Golgi intermediate compartment (ERGIC) to the cytosol. Probably plays a key role in spermatogenesis by regulating the intracellular concentration of polyamines in haploid germ cells. The sequence is that of Ornithine decarboxylase antizyme 3 (Oaz3) from Mus musculus (Mouse).